A 312-amino-acid chain; its full sequence is MSISESPKKHPVLLIAGPTASGKSQLAIAMGIKTNGIIINADASQLYTDLQILTARPSDADEKILPHRLFGIQDGSEPASAVFWAELAKKEIKNAHESGRLPILVGGTGLYIRTLLEGIAPIPDIAPELREEVRSMSVEEAYSALQQEDPMAADRLRPTDKTRIMRALEVMRSTGHPLHYWQQKKTGGIANEIKLQSFVIIPPANILRSRCDKRFDQMLEQGAEKEVIRLMGRQLPADLPIMRAIGVREIASYIRGEIDRLTMIEKAKAATRQYAKRQRTWFRHQTDESWIKIFDDINFKKIDDFAIKLLSI.

17-24 (GPTASGKS) contributes to the ATP binding site. 19 to 24 (TASGKS) is a substrate binding site.

Belongs to the IPP transferase family. Monomer. Mg(2+) is required as a cofactor.

The catalysed reaction is adenosine(37) in tRNA + dimethylallyl diphosphate = N(6)-dimethylallyladenosine(37) in tRNA + diphosphate. Functionally, catalyzes the transfer of a dimethylallyl group onto the adenine at position 37 in tRNAs that read codons beginning with uridine, leading to the formation of N6-(dimethylallyl)adenosine (i(6)A). The protein is tRNA dimethylallyltransferase of Zymomonas mobilis subsp. mobilis (strain ATCC 31821 / ZM4 / CP4).